The following is a 142-amino-acid chain: ATP synthase epsilon chain (142 aa).

It belongs to the ATPase epsilon chain family. In terms of assembly, F-type ATPases have 2 components, CF(1) - the catalytic core - and CF(0) - the membrane proton channel. CF(1) has five subunits: alpha(3), beta(3), gamma(1), delta(1), epsilon(1). CF(0) has three main subunits: a, b and c.

It is found in the cell inner membrane. Its function is as follows. Produces ATP from ADP in the presence of a proton gradient across the membrane. This Histophilus somni (strain 2336) (Haemophilus somnus) protein is ATP synthase epsilon chain.